The following is an 84-amino-acid chain: Small ribosomal subunit protein bS18 (84 aa).

This sequence belongs to the bacterial ribosomal protein bS18 family. In terms of assembly, part of the 30S ribosomal subunit. Forms a tight heterodimer with protein bS6.

Binds as a heterodimer with protein bS6 to the central domain of the 16S rRNA, where it helps stabilize the platform of the 30S subunit. The protein is Small ribosomal subunit protein bS18 of Mycobacterium leprae (strain Br4923).